A 147-amino-acid chain; its full sequence is Small ribosomal subunit protein uS12 (147 aa).

The protein belongs to the universal ribosomal protein uS12 family. As to quaternary structure, part of the 30S ribosomal subunit.

In terms of biological role, with S4 and S5 plays an important role in translational accuracy. Located at the interface of the 30S and 50S subunits. The polypeptide is Small ribosomal subunit protein uS12 (Methanococcus maripaludis (strain DSM 14266 / JCM 13030 / NBRC 101832 / S2 / LL)).